Reading from the N-terminus, the 297-residue chain is 4-hydroxy-tetrahydrodipicolinate synthase (297 aa).

Residue Thr50 coordinates pyruvate. Tyr138 (proton donor/acceptor) is an active-site residue. The active-site Schiff-base intermediate with substrate is Lys166. Ile208 is a pyruvate binding site.

It belongs to the DapA family. In terms of assembly, homotetramer; dimer of dimers.

The protein resides in the cytoplasm. It catalyses the reaction L-aspartate 4-semialdehyde + pyruvate = (2S,4S)-4-hydroxy-2,3,4,5-tetrahydrodipicolinate + H2O + H(+). The protein operates within amino-acid biosynthesis; L-lysine biosynthesis via DAP pathway; (S)-tetrahydrodipicolinate from L-aspartate: step 3/4. In terms of biological role, catalyzes the condensation of (S)-aspartate-beta-semialdehyde [(S)-ASA] and pyruvate to 4-hydroxy-tetrahydrodipicolinate (HTPA). This chain is 4-hydroxy-tetrahydrodipicolinate synthase, found in Gluconobacter oxydans (strain 621H) (Gluconobacter suboxydans).